A 237-amino-acid chain; its full sequence is Cobalt-precorrin-2 C(20)-methyltransferase (237 aa).

It belongs to the precorrin methyltransferase family. In terms of assembly, homodimer.

It catalyses the reaction Co-precorrin-2 + S-adenosyl-L-methionine = Co-precorrin-3 + S-adenosyl-L-homocysteine + H(+). It functions in the pathway cofactor biosynthesis; adenosylcobalamin biosynthesis; cob(II)yrinate a,c-diamide from sirohydrochlorin (anaerobic route): step 2/10. Its function is as follows. Methylates cobalt-precorrin-2 at the C-20 position to produce cobalt-precorrin-3A in the anaerobic cobalamin biosynthesis pathway. The protein is Cobalt-precorrin-2 C(20)-methyltransferase (cbiL) of Salmonella typhimurium (strain LT2 / SGSC1412 / ATCC 700720).